The sequence spans 580 residues: Nuclear body protein SP140-like protein (580 aa).

The 117-residue stretch at 33–149 (SLQRLFTEDQ…IYKSFKNAIQ (117 aa)) folds into the HSR domain. Residues 155–293 (QESDRKEREE…RSRASRKHKD (139 aa)) form a disordered region. Residues 156-170 (ESDRKEREERPDIKL) show a composition bias toward basic and acidic residues. Lys169 participates in a covalent cross-link: Glycyl lysine isopeptide (Lys-Gly) (interchain with G-Cter in SUMO2). Residue Ser180 is modified to Phosphoserine. Basic residues predominate over residues 207–219 (KPKRKRRKKKGHG). Residues 224–236 (GTRTQKNNQQNDN) are compositionally biased toward polar residues. Basic residues predominate over residues 280–290 (QKRVRSRASRK). Lys292 participates in a covalent cross-link: Glycyl lysine isopeptide (Lys-Gly) (interchain with G-Cter in SUMO2). An SAND domain is found at 293 to 374 (DETVDFQAPL…RRLMEEGSLP (82 aa)). Residues 403–449 (LDECEVCRDGGELFCCDTCSRVFHEDCHIPPVESEKTPWNCIFCRMK) form a PHD-type zinc finger. Residues 467–570 (QMCPEEQLKC…AEFEKDFKEV (104 aa)) form the Bromo domain.

This is Nuclear body protein SP140-like protein (SP140L) from Homo sapiens (Human).